The primary structure comprises 357 residues: Cinnamyl alcohol dehydrogenase 7 (357 aa).

Residue C46 coordinates Zn(2+). T48 is an NADP(+) binding site. Zn(2+) contacts are provided by H68, E69, C99, C102, C105, C113, and C162. NADP(+)-binding positions include T166, 187 to 192, 210 to 215, T250, G274, and 297 to 299; these read GLGGLG, STSERK, and SMV.

Belongs to the zinc-containing alcohol dehydrogenase family. Homodimer. Zn(2+) is required as a cofactor. In terms of tissue distribution, expressed in the differentiation and elongation zones of primary and lateral roots. Expressed in the hypocotyl, cotyledon and leaf veins, hydathodes and trichomes. In stems, expressed in the vascular cambium region. Expressed in the style, anthers, stamen filaments, vascular tissues of sepals and stigmatic regions in flowers, and abscission, style and stigmatic regions of siliques and seed testa.

The catalysed reaction is (E)-cinnamyl alcohol + NADP(+) = (E)-cinnamaldehyde + NADPH + H(+). Its pathway is aromatic compound metabolism; phenylpropanoid biosynthesis. Functionally, involved in lignin biosynthesis. Catalyzes the final step specific for the production of lignin monomers. Catalyzes the NADPH-dependent reduction of coniferaldehyde, 5-hydroxyconiferaldehyde, sinapaldehyde, 4-coumaraldehyde and caffeyl aldehyde to their respective alcohols. The protein is Cinnamyl alcohol dehydrogenase 7 (CAD7) of Arabidopsis thaliana (Mouse-ear cress).